The following is a 111-amino-acid chain: UPF0060 membrane protein NFA_36830 (111 aa).

The next 4 helical transmembrane spans lie at 7–27, 33–53, 62–82, and 91–111; these read LVLF…VWQG, GLWW…VATF, VLAA…VLVD, and LLGA…PRGG.

It belongs to the UPF0060 family.

The protein localises to the cell membrane. The polypeptide is UPF0060 membrane protein NFA_36830 (Nocardia farcinica (strain IFM 10152)).